The chain runs to 216 residues: MLEIFDVSYEELMDMRSDDLYRLRKKTFKDRLQWAVNCSNDMEFDEYDNPNTRYLLGIYGNQLICSVRFIELHRPNMITHTFNAQFDDIILPEGNYIESSRFFVDKSGAKTLLGNRYPISYVLFLAVINYTRHHKHTGIYTIVSRAMLTILKRSGWQFDVIKEAFVSEKERIYLLRLPVDKHNQALLASQVNQVLQGSDSALLAWPISLPVIPELV.

The protein belongs to the autoinducer synthase family.

It carries out the reaction a fatty acyl-[ACP] + S-adenosyl-L-methionine = an N-acyl-L-homoserine lactone + S-methyl-5'-thioadenosine + holo-[ACP] + H(+). Functionally, required for the synthesis of an acyl-HSL autoinducer that binds to YukR and which is involved in the regulation of motility and morphology. The polypeptide is Acyl-homoserine-lactone synthase (yukI) (Yersinia ruckeri).